We begin with the raw amino-acid sequence, 237 residues long: NAD-dependent protein deacetylase (237 aa).

The 237-residue stretch at 1–237 folds into the Deacetylase sirtuin-type domain; it reads MQDITQAEAI…TIFAELTIKE (237 aa). NAD(+)-binding residues include Ala25, Thr29, Arg37, Gln100, Ile102, Asp103, and His118. Nicotinamide-binding residues include Ile102 and Asp103. His118 functions as the Proton acceptor in the catalytic mechanism. Zn(2+) contacts are provided by Cys126, Cys129, His144, and Cys147. NAD(+) contacts are provided by Thr185, Ser186, and Asn209.

Belongs to the sirtuin family. Class U subfamily.

The protein resides in the cytoplasm. It catalyses the reaction N(6)-acetyl-L-lysyl-[protein] + NAD(+) + H2O = 2''-O-acetyl-ADP-D-ribose + nicotinamide + L-lysyl-[protein]. In terms of biological role, NAD-dependent protein deacetylase which modulates the activities of several enzymes which are inactive in their acetylated form. This Enterococcus faecalis (strain ATCC 700802 / V583) protein is NAD-dependent protein deacetylase.